We begin with the raw amino-acid sequence, 249 residues long: Phosphate import ATP-binding protein PstB (249 aa).

The region spanning 5-244 (LRIEDLHFWY…PEKDRTEAYV (240 aa)) is the ABC transporter domain. 37–44 (GPSGCGKS) lines the ATP pocket.

Belongs to the ABC transporter superfamily. Phosphate importer (TC 3.A.1.7) family. As to quaternary structure, the complex is composed of two ATP-binding proteins (PstB), two transmembrane proteins (PstC and PstA) and a solute-binding protein (PstS).

The protein localises to the cell inner membrane. It catalyses the reaction phosphate(out) + ATP + H2O = ADP + 2 phosphate(in) + H(+). Its function is as follows. Part of the ABC transporter complex PstSACB involved in phosphate import. Responsible for energy coupling to the transport system. This Salinibacter ruber (strain DSM 13855 / M31) protein is Phosphate import ATP-binding protein PstB.